A 351-amino-acid polypeptide reads, in one-letter code: Anthranilate phosphoribosyltransferase (351 aa).

Residues G84, 87-88 (GD), 95-98 (NISS), 113-121 (KHGNRGASS), and A125 each bind 5-phospho-alpha-D-ribose 1-diphosphate. G84 provides a ligand contact to anthranilate. Residue S97 coordinates Mg(2+). N116 serves as a coordination point for anthranilate. R171 serves as a coordination point for anthranilate. Residues D229 and K230 each coordinate Mg(2+).

Belongs to the anthranilate phosphoribosyltransferase family. As to quaternary structure, homodimer. It depends on Mg(2+) as a cofactor.

The enzyme catalyses N-(5-phospho-beta-D-ribosyl)anthranilate + diphosphate = 5-phospho-alpha-D-ribose 1-diphosphate + anthranilate. It participates in amino-acid biosynthesis; L-tryptophan biosynthesis; L-tryptophan from chorismate: step 2/5. Catalyzes the transfer of the phosphoribosyl group of 5-phosphorylribose-1-pyrophosphate (PRPP) to anthranilate to yield N-(5'-phosphoribosyl)-anthranilate (PRA). This chain is Anthranilate phosphoribosyltransferase, found in Clavibacter michiganensis subsp. michiganensis (strain NCPPB 382).